The chain runs to 453 residues: Pup--protein ligase (453 aa).

Glu9 contributes to the Mg(2+) binding site. An ATP-binding site is contributed by Arg53. Tyr55 contributes to the Mg(2+) binding site. Residue Asp57 is the Proton acceptor of the active site. A Mg(2+)-binding site is contributed by Glu63. ATP is bound by residues Thr66 and Trp420.

Belongs to the Pup ligase/Pup deamidase family. Pup-conjugating enzyme subfamily.

It catalyses the reaction ATP + [prokaryotic ubiquitin-like protein]-L-glutamate + [protein]-L-lysine = ADP + phosphate + N(6)-([prokaryotic ubiquitin-like protein]-gamma-L-glutamyl)-[protein]-L-lysine.. It participates in protein degradation; proteasomal Pup-dependent pathway. It functions in the pathway protein modification; protein pupylation. Functionally, catalyzes the covalent attachment of the prokaryotic ubiquitin-like protein modifier Pup to the proteasomal substrate proteins, thereby targeting them for proteasomal degradation. This tagging system is termed pupylation. The ligation reaction involves the side-chain carboxylate of the C-terminal glutamate of Pup and the side-chain amino group of a substrate lysine. The polypeptide is Pup--protein ligase (Streptomyces avermitilis (strain ATCC 31267 / DSM 46492 / JCM 5070 / NBRC 14893 / NCIMB 12804 / NRRL 8165 / MA-4680)).